A 593-amino-acid chain; its full sequence is Ribonuclease Y (593 aa).

A helical transmembrane segment spans residues 6-26 (ILLMYLIVGLLTALTVLIFVF). Positions 218-278 (DPIKVKKVTD…IKLEVAYNAL (61 aa)) constitute a KH domain. The 111-residue stretch at 354–464 (VLTHSIEAAQ…TKIADFLSAA (111 aa)) folds into the HD domain.

Belongs to the RNase Y family.

The protein localises to the cell membrane. Functionally, endoribonuclease that initiates mRNA decay. The protein is Ribonuclease Y of Mycoplasmoides gallisepticum (strain R(low / passage 15 / clone 2)) (Mycoplasma gallisepticum).